The sequence spans 268 residues: Taurine import ATP-binding protein TauB (268 aa).

The 233-residue stretch at 4-236 (LSINNLSMRF…LGVDSDLREV (233 aa)) folds into the ABC transporter domain. 41-48 (GPSGCGKT) provides a ligand contact to ATP.

This sequence belongs to the ABC transporter superfamily. Taurine importer (TC 3.A.1.17.1) family. The complex is composed of two ATP-binding proteins (TauB), two transmembrane proteins (TauC) and a solute-binding protein (TauA).

It is found in the cell inner membrane. It carries out the reaction taurine(out) + ATP + H2O = taurine(in) + ADP + phosphate + H(+). Its function is as follows. Part of the ABC transporter complex TauABC involved in taurine import. Responsible for energy coupling to the transport system. This is Taurine import ATP-binding protein TauB from Roseobacter denitrificans (strain ATCC 33942 / OCh 114) (Erythrobacter sp. (strain OCh 114)).